We begin with the raw amino-acid sequence, 214 residues long: Protein get-1 (214 aa).

At 1-4 (MPSL) the chain is on the lumenal side. The chain crosses the membrane as a helical span at residues 5–24 (LVVIFVIELFVQLVNTIGAA). Topologically, residues 25–110 (TINNLLWRIA…KFDRTLTTVR (86 aa)) are cytoplasmic. Residues 73–107 (KWARLRRQHDKLLEDLEKRKKELDAAKTKFDRTLT) adopt a coiled-coil conformation. Residues 111–131 (VVATRGLQWFLPFWYSREPMF) traverse the membrane as a helical segment. Residues 132-155 (WLPYGWFPYYVEWFASFPRAPLGS) lie on the Lumenal side of the membrane. Residues 156–172 (VSIVVWQWACTGVIKLV) form a helical membrane-spanning segment. The Cytoplasmic portion of the chain corresponds to 173–214 (IETVMAVVGLIVAARQKQQEKQKAKQAVPAAGGGDSKAEEAK). The disordered stretch occupies residues 190–214 (QQEKQKAKQAVPAAGGGDSKAEEAK).

This sequence belongs to the WRB/GET1 family. As to quaternary structure, interacts with GET3.

It is found in the endoplasmic reticulum membrane. Required for the post-translational delivery of tail-anchored (TA) proteins to the endoplasmic reticulum. Acts as a membrane receptor for soluble GET3, which recognizes and selectively binds the transmembrane domain of TA proteins in the cytosol. The protein is Protein get-1 (get-1) of Neurospora crassa (strain ATCC 24698 / 74-OR23-1A / CBS 708.71 / DSM 1257 / FGSC 987).